The primary structure comprises 420 residues: Transcription factor dbaG (420 aa).

The protein localises to the nucleus. In terms of biological role, transcription factor that coregulates the expression of the gene cluster that mediates the biosynthesis of the antibiotic 2,4- dihydroxy-3-methyl-6-(2-oxopropyl)benzaldehyde (DHMBA) and its derivatives. Specifically positively regulates the expression of the FAD-dependent oxidoreductase dbaF. In Emericella nidulans (strain FGSC A4 / ATCC 38163 / CBS 112.46 / NRRL 194 / M139) (Aspergillus nidulans), this protein is Transcription factor dbaG.